We begin with the raw amino-acid sequence, 311 residues long: MEPLREIRNRLLNGWQLSKMHTFEVAARHQSFALAAEELSLSPSAVSHRINQLEEELGIQLFVRSHRKVELTHEGKRVYWALKSSLDTLNQEILDIKNQELSGTLTLYSRPSIAQCWLVPALGDFTRRYPSISLTVLTGNDNVNLQRAGIDLAIYFDDAPSAQLTHHFLMDEEILPVCSPEYAQRHALTNTVINLCHCTLLHDRQAWSNDSGTDEWHSWAQHYAVNLPTSSGIGFDRSDLAVIAAMNHIGVAMGRKRLVQKRLASGELVAPFGDMTVKCHQHYYITTLPGRQWPKIEAFIIWLREQVKTTS.

One can recognise an HTH lysR-type domain in the interval W15 to T72. Positions F32–N51 form a DNA-binding region, H-T-H motif.

The protein belongs to the LysR transcriptional regulatory family.

In terms of biological role, regulates the expression of the dsdX-dsdA operon. The polypeptide is HTH-type transcriptional regulator DsdC (Escherichia coli (strain K12)).